A 555-amino-acid polypeptide reads, in one-letter code: uncharacterized protein (555 aa).

Helical transmembrane passes span 13–30, 35–57, 72–91, 98–120, and 157–179; these read ALQAVVVLSLISAIGLGL, FWGVSLGVTFVFFAGILAGHFGL, LVIFVYSLGLQVGPGFFSSF, LNMLALAVVLLGTLLTVVASYAT, and TPALGCAVAYPMGVIGVILAVLL. RCK C-terminal domains are found at residues 188–273 and 282–366; these read EDLE…LFGE and KEDI…VLGN. A run of 6 helical transmembrane segments spans residues 376 to 398, 408 to 430, 437 to 459, 469 to 491, 498 to 517, and 532 to 554; these read LVVIFIGIVLGLALGAIPFSIPG, AGGPIIVGILLGTFGPRIHMITY, LMLRALGLSMYLACLGLDAGAHF, LLWIALGAGLTIIPTVLVGFVAF, FGSVSGMLCGSMANPMALNY, and ATVYPLCMFLRVIIAQVLLMFLL.

Belongs to the AAE transporter (TC 2.A.81) family.

It is found in the cell membrane. This is an uncharacterized protein from Bacteroides thetaiotaomicron (strain ATCC 29148 / DSM 2079 / JCM 5827 / CCUG 10774 / NCTC 10582 / VPI-5482 / E50).